Consider the following 278-residue polypeptide: Ribosomal RNA small subunit methyltransferase A (278 aa).

6 residues coordinate S-adenosyl-L-methionine: N27, L29, G54, E75, D101, and N122.

Belongs to the class I-like SAM-binding methyltransferase superfamily. rRNA adenine N(6)-methyltransferase family. RsmA subfamily.

It localises to the cytoplasm. It catalyses the reaction adenosine(1518)/adenosine(1519) in 16S rRNA + 4 S-adenosyl-L-methionine = N(6)-dimethyladenosine(1518)/N(6)-dimethyladenosine(1519) in 16S rRNA + 4 S-adenosyl-L-homocysteine + 4 H(+). Functionally, specifically dimethylates two adjacent adenosines (A1518 and A1519) in the loop of a conserved hairpin near the 3'-end of 16S rRNA in the 30S particle. May play a critical role in biogenesis of 30S subunits. This Brucella anthropi (strain ATCC 49188 / DSM 6882 / CCUG 24695 / JCM 21032 / LMG 3331 / NBRC 15819 / NCTC 12168 / Alc 37) (Ochrobactrum anthropi) protein is Ribosomal RNA small subunit methyltransferase A.